We begin with the raw amino-acid sequence, 328 residues long: GMP reductase (328 aa).

The active-site Thioimidate intermediate is cysteine 176. Residue 205–228 (IIADGGIRTHGDVAKSIRFGATMV) participates in NADP(+) binding.

The protein belongs to the IMPDH/GMPR family. GuaC type 2 subfamily.

The catalysed reaction is IMP + NH4(+) + NADP(+) = GMP + NADPH + 2 H(+). In terms of biological role, catalyzes the irreversible NADPH-dependent deamination of GMP to IMP. It functions in the conversion of nucleobase, nucleoside and nucleotide derivatives of G to A nucleotides, and in maintaining the intracellular balance of A and G nucleotides. The sequence is that of GMP reductase from Bacillus thuringiensis (strain Al Hakam).